Consider the following 131-residue polypeptide: PDZ domain-containing protein C52A11.3 (131 aa).

The 77-residue stretch at 51–127 (LVKLQKDANR…RLYLQIARPH (77 aa)) folds into the PDZ domain.

The sequence is that of PDZ domain-containing protein C52A11.3 from Caenorhabditis elegans.